Here is a 760-residue protein sequence, read N- to C-terminus: Transglutaminase-activating metalloprotease (760 aa).

The signal sequence occupies residues 1 to 33; that stretch reads MRPTPQRRAVATGALVAVTAMLAVGVQTTSANA. Disordered regions lie at residues 32–59 and 228–265; these read NAGQDKAAHPAPRQSIHKPDPGAEPVKL and KQGTGNSQHSGQVQIGTTKSGSSYQMNDTTRGGHKTYN. Positions 34 to 229 are excised as a propeptide; sequence GQDKAAHPAP…KLFEFQGVKQ (196 aa). A compositionally biased stretch (polar residues) spans 228–257; that stretch reads KQGTGNSQHSGQVQIGTTKSGSSYQMNDTT. Histidine 366 provides a ligand contact to Zn(2+). Glutamate 367 is an active-site residue. The Zn(2+) site is built by histidine 370 and glutamate 390. Histidine 454 serves as the catalytic Proton donor. The P/Homo B domain maps to 640–760; sequence TVNTTGGGSV…GTIDKWRLTF (121 aa).

It belongs to the peptidase M4 family. Zn(2+) is required as a cofactor.

It is found in the secreted. Functionally, cleaves the N-terminal propeptide of transglutaminase thus activating it. The protein is Transglutaminase-activating metalloprotease of Streptomyces mobaraensis (Streptoverticillium mobaraense).